The following is a 454-amino-acid chain: Phosphoglucosamine mutase (454 aa).

Serine 104 acts as the Phosphoserine intermediate in catalysis. 4 residues coordinate Mg(2+): serine 104, aspartate 244, aspartate 246, and aspartate 248. Residue serine 104 is modified to Phosphoserine.

It belongs to the phosphohexose mutase family. It depends on Mg(2+) as a cofactor. In terms of processing, activated by phosphorylation.

It carries out the reaction alpha-D-glucosamine 1-phosphate = D-glucosamine 6-phosphate. Functionally, catalyzes the conversion of glucosamine-6-phosphate to glucosamine-1-phosphate. The chain is Phosphoglucosamine mutase from Lacticaseibacillus paracasei (strain ATCC 334 / BCRC 17002 / CCUG 31169 / CIP 107868 / KCTC 3260 / NRRL B-441) (Lactobacillus paracasei).